We begin with the raw amino-acid sequence, 447 residues long: Phosphoglucosamine mutase (447 aa).

Catalysis depends on serine 88, which acts as the Phosphoserine intermediate. Residues serine 88, aspartate 231, aspartate 233, and aspartate 235 each contribute to the Mg(2+) site. Serine 88 is subject to Phosphoserine.

Belongs to the phosphohexose mutase family. The cofactor is Mg(2+). In terms of processing, activated by phosphorylation.

It carries out the reaction alpha-D-glucosamine 1-phosphate = D-glucosamine 6-phosphate. Its function is as follows. Catalyzes the conversion of glucosamine-6-phosphate to glucosamine-1-phosphate. In Methanococcus maripaludis (strain C5 / ATCC BAA-1333), this protein is Phosphoglucosamine mutase.